The sequence spans 360 residues: Phosphoserine aminotransferase (360 aa).

Arginine 41 lines the L-glutamate pocket. Positions 101, 152, 172, and 195 each coordinate pyridoxal 5'-phosphate. N6-(pyridoxal phosphate)lysine is present on lysine 196. 237–238 (NT) is a pyridoxal 5'-phosphate binding site.

The protein belongs to the class-V pyridoxal-phosphate-dependent aminotransferase family. SerC subfamily. Homodimer. Pyridoxal 5'-phosphate is required as a cofactor.

The protein resides in the cytoplasm. The catalysed reaction is O-phospho-L-serine + 2-oxoglutarate = 3-phosphooxypyruvate + L-glutamate. It carries out the reaction 4-(phosphooxy)-L-threonine + 2-oxoglutarate = (R)-3-hydroxy-2-oxo-4-phosphooxybutanoate + L-glutamate. It functions in the pathway amino-acid biosynthesis; L-serine biosynthesis; L-serine from 3-phospho-D-glycerate: step 2/3. The protein operates within cofactor biosynthesis; pyridoxine 5'-phosphate biosynthesis; pyridoxine 5'-phosphate from D-erythrose 4-phosphate: step 3/5. Catalyzes the reversible conversion of 3-phosphohydroxypyruvate to phosphoserine and of 3-hydroxy-2-oxo-4-phosphonooxybutanoate to phosphohydroxythreonine. The protein is Phosphoserine aminotransferase of Burkholderia lata (strain ATCC 17760 / DSM 23089 / LMG 22485 / NCIMB 9086 / R18194 / 383).